The sequence spans 465 residues: Lipase 10 (465 aa).

A signal peptide spans 1–16 (MKTLLIFLAFLSSIFA). Cys112 and Cys285 are disulfide-bonded. Catalysis depends on Ser196, which acts as the Charge relay system. N-linked (GlcNAc...) asparagine glycosylation is found at Asn231 and Asn319. Catalysis depends on charge relay system residues Asp348 and His381. Cys364 and Cys409 are joined by a disulfide.

It belongs to the AB hydrolase superfamily. Lipase family. Class Lip subfamily.

Its subcellular location is the secreted. The enzyme catalyses a triacylglycerol + H2O = a diacylglycerol + a fatty acid + H(+). Secreted lipase that is able to hydrolyze both the neutral triacylglycerols and the monopalmitate ester Tween 40, allowing the use of hydrolyzed products as carbon sources. Has broad lipolytic activity, which may be important for colonization and subsequent infection, therefore contributing to the persistence and virulence in human tissue. The protein is Lipase 10 of Candida albicans (strain SC5314 / ATCC MYA-2876) (Yeast).